A 258-amino-acid chain; its full sequence is Intron-associated endonuclease 2 (258 aa).

The region spanning 14–96 (SVAFTYMVRF…RKYFNNEFIL (83 aa)) is the GIY-YIG domain.

In terms of biological role, this endonuclease is specific to the nrdD gene splice junction and is involved in intron homing. This Escherichia coli (Bacteriophage T4) protein is Intron-associated endonuclease 2 (ITEVIIR).